Consider the following 424-residue polypeptide: UDP-N-acetylglucosamine 1-carboxyvinyltransferase (424 aa).

Position 22–23 (22–23 (KN)) interacts with phosphoenolpyruvate. UDP-N-acetyl-alpha-D-glucosamine is bound at residue Arg-93. The active-site Proton donor is the Cys-117. A 2-(S-cysteinyl)pyruvic acid O-phosphothioketal modification is found at Cys-117. UDP-N-acetyl-alpha-D-glucosamine-binding positions include 162–165 (KVSV), Asp-307, and Ile-329.

The protein belongs to the EPSP synthase family. MurA subfamily.

The protein resides in the cytoplasm. It carries out the reaction phosphoenolpyruvate + UDP-N-acetyl-alpha-D-glucosamine = UDP-N-acetyl-3-O-(1-carboxyvinyl)-alpha-D-glucosamine + phosphate. It participates in cell wall biogenesis; peptidoglycan biosynthesis. Cell wall formation. Adds enolpyruvyl to UDP-N-acetylglucosamine. This Actinobacillus pleuropneumoniae serotype 3 (strain JL03) protein is UDP-N-acetylglucosamine 1-carboxyvinyltransferase.